Consider the following 513-residue polypeptide: ATP synthase subunit alpha (513 aa).

G169–S176 lines the ATP pocket.

The protein belongs to the ATPase alpha/beta chains family. As to quaternary structure, F-type ATPases have 2 components, CF(1) - the catalytic core - and CF(0) - the membrane proton channel. CF(1) has five subunits: alpha(3), beta(3), gamma(1), delta(1), epsilon(1). CF(0) has three main subunits: a(1), b(2) and c(9-12). The alpha and beta chains form an alternating ring which encloses part of the gamma chain. CF(1) is attached to CF(0) by a central stalk formed by the gamma and epsilon chains, while a peripheral stalk is formed by the delta and b chains.

It is found in the cell membrane. It carries out the reaction ATP + H2O + 4 H(+)(in) = ADP + phosphate + 5 H(+)(out). In terms of biological role, produces ATP from ADP in the presence of a proton gradient across the membrane. The alpha chain is a regulatory subunit. The polypeptide is ATP synthase subunit alpha (Baumannia cicadellinicola subsp. Homalodisca coagulata).